Reading from the N-terminus, the 365-residue chain is Putative clathrin assembly protein At4g40080 (365 aa).

The ENTH domain maps to 29–167 (NTKSKTLSFH…STSRIMGFFI (139 aa)).

The protein resides in the membrane. It is found in the clathrin-coated pit. It localises to the golgi apparatus. Its subcellular location is the cytoplasmic vesicle. The protein localises to the clathrin-coated vesicle. This Arabidopsis thaliana (Mouse-ear cress) protein is Putative clathrin assembly protein At4g40080.